A 126-amino-acid chain; its full sequence is Fluoride-specific ion channel FluC (126 aa).

The next 4 membrane-spanning stretches (helical) occupy residues 4 to 24, 36 to 56, 67 to 85, and 101 to 121; these read LLLV…TSAW, GTLL…TASL, LFLA…SFNY, and AYLL…TLLV. 2 residues coordinate Na(+): Gly75 and Thr78.

It belongs to the fluoride channel Fluc/FEX (TC 1.A.43) family.

The protein resides in the cell inner membrane. The catalysed reaction is fluoride(in) = fluoride(out). Na(+) is not transported, but it plays an essential structural role and its presence is essential for fluoride channel function. Functionally, fluoride-specific ion channel. Important for reducing fluoride concentration in the cell, thus reducing its toxicity. The sequence is that of Fluoride-specific ion channel FluC from Anaeromyxobacter dehalogenans (strain 2CP-1 / ATCC BAA-258).